The chain runs to 242 residues: MSAQAAAATAAALQFKGRMITVTLLRLLSPSLEAVGRELDARLADGSGLLAGLPTVLDLEALGESAAGLELAALAATLRAHGVSLIGLRELPGEAGEALRTRAEAAGLAVLNVDGSRAAPRREVEVSPRPAAEPVRSLLVTQPVRSGQQVYARGGDLILTAPVSAGAEVMADGNIHVYAPLRGRAMAGVLGDSGARIFCQRLDCELVAVAGHYRLSEQISDAERAGPVQVRLEGESLVIEAL.

Belongs to the MinC family. In terms of assembly, interacts with MinD and FtsZ.

Cell division inhibitor that blocks the formation of polar Z ring septums. Rapidly oscillates between the poles of the cell to destabilize FtsZ filaments that have formed before they mature into polar Z rings. Prevents FtsZ polymerization. The chain is Probable septum site-determining protein MinC from Thioalkalivibrio sulfidiphilus (strain HL-EbGR7).